Reading from the N-terminus, the 1021-residue chain is Ribosome quality control complex subunit 2 (1021 aa).

Positions 348–388 form a coiled coil; that stretch reads IEAQKLKKRAHDRLATAERRLESAKEDQARKLQSLQDAQAT. Residues 457–484 form a disordered region; the sequence is NPESVDNSDESSETSDDDLDDSDDDNKV. The span at 462-480 shows a compositional bias: acidic residues; it reads DNSDESSETSDDDLDDSDD. At S478 the chain carries Phosphoserine. Coiled coils occupy residues 507–546 and 698–727; these read NARKQYELRREALIKETKTAEAASKALKSTQRKIEQDLKR and DEKSSERRKARRLEMEVVETQGKVSELKME. Polar residues-rich tracts occupy residues 746–761 and 839–856; these read YNEDTNNQSTPDTTGS and ISSQIPSNDSSNVQTPTA. Disordered stretches follow at residues 746–801 and 832–905; these read YNED…TALE and HAAR…VESF. Positions 876–905 are enriched in basic and acidic residues; that stretch reads DQSRNSEAENEKGLSTEQRDEKKHAKVESF.

Belongs to the NEMF family. In terms of assembly, component of the ribosome quality control complex (RQC), composed of the E3 ubiquitin ligase rkr1/ltn1, rqc1 and mtr1/rqc2, as well as cdc48 and its ubiquitin-binding cofactors associated with the 60S ribosomal subunit. RQC2 binds to the 40S-binding surface of tRNAs.

The protein resides in the cytoplasm. Functionally, key component of the ribosome quality control complex (RQC), a ribosome-associated complex that mediates the extraction of incompletely synthesized nascent chains from stalled ribosomes as well as their ubiquitin-mediated proteasomal degradation. Thereby, frees 60S subunit ribosomes from the stalled translation complex and prevents the accumulation of nascent polypeptide chains that are potentially toxic for the cell. Within the RQC complex, mtr1/rqc2 specifically binds stalled 60S ribosomal subunits by recognizing an exposed, nascent chain-conjugated tRNA moiety and promotes the recruitment of rkr1/ltn1 to stalled 60S subunits. Following binding to stalled 60S ribosomal subunits, mtr1/rqc2 mediates CAT tailing by recruiting alanine- and threonine-charged tRNA to the A-site and directing the elongation of stalled nascent chains independently of mRNA or 40S subunits, leading to non-templated C-terminal Ala and Thr extensions (CAT tails). CAT tails promote the rkr1/ltn1-mediated ubiquitination of incompletely synthesized nascent polypeptides: CAT tailing facilitates rkr1/ltn1-dependent ubiquitination by exposing lysine residues that would otherwise remain buried in the ribosomal exit tunnel. Following ubiquitination, incompletely synthesized nascent polypeptides are recognized by CDC48 and degraded by the proteasome. CAT-tailed proteins tend to aggregate and sequester chaperones and can induce proteotoxic stress; their rkr1/ltn1-dependent ubiquitination and degradation is required to prevent proteotoxic stress. This Schizosaccharomyces pombe (strain 972 / ATCC 24843) (Fission yeast) protein is Ribosome quality control complex subunit 2.